The following is a 537-amino-acid chain: uncharacterized protein (537 aa).

The tract at residues histidine 10–serine 56 is disordered. Basic and acidic residues predominate over residues threonine 31–serine 46. A run of 12 helical transmembrane segments spans residues phenylalanine 90 to isoleucine 110, leucine 133 to glycine 153, tryptophan 156 to tyrosine 176, methionine 180 to alanine 200, glycine 213 to isoleucine 233, tryptophan 243 to proline 263, proline 313 to leucine 333, tyrosine 348 to leucine 368, phenylalanine 393 to threonine 413, serine 422 to isoleucine 442, isoleucine 457 to isoleucine 477, and alanine 492 to isoleucine 512.

This sequence belongs to the major facilitator superfamily. CAR1 family.

Its subcellular location is the endoplasmic reticulum. The protein localises to the golgi apparatus. It is found in the membrane. This is an uncharacterized protein from Schizosaccharomyces pombe (strain 972 / ATCC 24843) (Fission yeast).